Reading from the N-terminus, the 131-residue chain is Aspartate 1-decarboxylase (131 aa).

The active-site Schiff-base intermediate with substrate; via pyruvic acid is serine 25. At serine 25 the chain carries Pyruvic acid (Ser). Threonine 57 is a substrate binding site. Tyrosine 58 serves as the catalytic Proton donor. Position 73-75 (73-75 (GAA)) interacts with substrate.

It belongs to the PanD family. Heterooctamer of four alpha and four beta subunits. Requires pyruvate as cofactor. In terms of processing, is synthesized initially as an inactive proenzyme, which is activated by self-cleavage at a specific serine bond to produce a beta-subunit with a hydroxyl group at its C-terminus and an alpha-subunit with a pyruvoyl group at its N-terminus.

The protein localises to the cytoplasm. The enzyme catalyses L-aspartate + H(+) = beta-alanine + CO2. Its pathway is cofactor biosynthesis; (R)-pantothenate biosynthesis; beta-alanine from L-aspartate: step 1/1. Functionally, catalyzes the pyruvoyl-dependent decarboxylation of aspartate to produce beta-alanine. In Chlorobium phaeobacteroides (strain DSM 266 / SMG 266 / 2430), this protein is Aspartate 1-decarboxylase.